The chain runs to 332 residues: L-lactate dehydrogenase A chain (332 aa).

Residues 29–57 and Arg-99 each bind NAD(+); that span reads GAVGMACAISILMKDLADELALVDVVEDK. Substrate-binding residues include Arg-106, Asn-138, and Arg-169. Asn-138 lines the NAD(+) pocket. The Proton acceptor role is filled by His-193. Thr-248 is a substrate binding site.

The protein belongs to the LDH/MDH superfamily. LDH family. In terms of assembly, homotetramer.

The protein localises to the cytoplasm. The catalysed reaction is (S)-lactate + NAD(+) = pyruvate + NADH + H(+). The protein operates within fermentation; pyruvate fermentation to lactate; (S)-lactate from pyruvate: step 1/1. Interconverts simultaneously and stereospecifically pyruvate and lactate with concomitant interconversion of NADH and NAD(+). This is L-lactate dehydrogenase A chain (LDHA) from Columba livia (Rock dove).